A 171-amino-acid polypeptide reads, in one-letter code: Protein GrpE (171 aa).

Residues 1 to 22 (MNHEQPDIESQQSAADAAATAG) form a disordered region.

The protein belongs to the GrpE family. In terms of assembly, homodimer.

The protein resides in the cytoplasm. Its function is as follows. Participates actively in the response to hyperosmotic and heat shock by preventing the aggregation of stress-denatured proteins, in association with DnaK and GrpE. It is the nucleotide exchange factor for DnaK and may function as a thermosensor. Unfolded proteins bind initially to DnaJ; upon interaction with the DnaJ-bound protein, DnaK hydrolyzes its bound ATP, resulting in the formation of a stable complex. GrpE releases ADP from DnaK; ATP binding to DnaK triggers the release of the substrate protein, thus completing the reaction cycle. Several rounds of ATP-dependent interactions between DnaJ, DnaK and GrpE are required for fully efficient folding. The protein is Protein GrpE of Stenotrophomonas maltophilia (strain K279a).